The following is a 1038-amino-acid chain: Translation initiation factor IF-2 (1038 aa).

Disordered regions lie at residues 39–346 (TISE…KWQE) and 403–451 (KPKA…PEKV). The segment covering 103-125 (RNTTSNAPEASVANNQIASSEAN) has biased composition (polar residues). The segment covering 157-176 (PQKPAAPEAEPEAQSQAPAK) has biased composition (low complexity). Composition is skewed to basic and acidic residues over residues 178-197 (AVEK…ERQP) and 226-243 (PILK…DQAK). The segment covering 407–423 (ARAATAATAAPISSPTT) has biased composition (low complexity). Over residues 431–450 (NNRDQNRRQETEVKRERPEK) the composition is skewed to basic and acidic residues. Residues 532-705 (RRPPVVTIMG…LLVAEVGELS (174 aa)) form the tr-type G domain. The interval 541–548 (GHVDHGKT) is G1. Position 541–548 (541–548 (GHVDHGKT)) interacts with GTP. The segment at 566–570 (GITQH) is G2. A G3 region spans residues 591-594 (DTPG). GTP is bound by residues 591–595 (DTPGH) and 645–648 (NKID). A G4 region spans residues 645-648 (NKID). The segment at 681–683 (SAI) is G5.

This sequence belongs to the TRAFAC class translation factor GTPase superfamily. Classic translation factor GTPase family. IF-2 subfamily.

The protein resides in the cytoplasm. One of the essential components for the initiation of protein synthesis. Protects formylmethionyl-tRNA from spontaneous hydrolysis and promotes its binding to the 30S ribosomal subunits. Also involved in the hydrolysis of GTP during the formation of the 70S ribosomal complex. The sequence is that of Translation initiation factor IF-2 from Trichormus variabilis (strain ATCC 29413 / PCC 7937) (Anabaena variabilis).